We begin with the raw amino-acid sequence, 293 residues long: uncharacterized protein (293 aa).

Residues T43 and Y105 each act as charge relay system in the active site. The Proton donor role is filled by Y131. The Schiff-base intermediate with substrate role is filled by K159.

The protein belongs to the DapA family. Homotetramer.

The protein localises to the cytoplasm. This is an uncharacterized protein from Thermococcus onnurineus (strain NA1).